A 355-amino-acid chain; its full sequence is Probable nitronate monooxygenase (355 aa).

FMN contacts are provided by residues asparagine 71, glutamine 175, glycine 180, glycine 218, and 237–240 (QMGT).

This sequence belongs to the nitronate monooxygenase family. NMO class I subfamily. Requires FMN as cofactor.

It carries out the reaction 3 propionate 3-nitronate + 3 O2 + H2O = 3 3-oxopropanoate + 2 nitrate + nitrite + H2O2 + 3 H(+). In terms of biological role, nitronate monooxygenase that uses molecular oxygen to catalyze the oxidative denitrification of alkyl nitronates. Acts on propionate 3-nitronate (P3N), the presumed physiological substrate. Probably functions in the detoxification of P3N, a metabolic poison produced by plants and fungi as a defense mechanism. This Staphylococcus aureus (strain MSSA476) protein is Probable nitronate monooxygenase.